The chain runs to 1134 residues: Envelopment polyprotein (1134 aa).

The N-terminal stretch at 1-16 (MWSLLLLAALVGQGFA) is a signal peptide. Over 17–484 (LKNVFDMRIQ…PGFHGWATAA (468 aa)) the chain is Lumenal. 10 disulfides stabilise this stretch: cysteine 27–cysteine 149, cysteine 61–cysteine 155, cysteine 107–cysteine 126, cysteine 131–cysteine 136, cysteine 173–cysteine 183, cysteine 208–cysteine 245, cysteine 232–cysteine 349, cysteine 374–cysteine 433, cysteine 378–cysteine 387, and cysteine 403–cysteine 422. N-linked (GlcNAc...) asparagine; by host glycosylation is present at asparagine 132. Asparagine 233 and asparagine 345 each carry an N-linked (GlcNAc...) asparagine; by host glycan. The N-linked (GlcNAc...) asparagine; by host glycan is linked to asparagine 397. A helical transmembrane segment spans residues 485–504 (LLITFCFGWVLIPACTLAIL). The Cytoplasmic segment spans residues 505-626 (LVLKFFANIL…NLFRYKSRCY (122 aa)). Residues 514-531 (LHTSNQENRFKAILRKIK) form a binding to the ribonucleoprotein region. 2 consecutive CCHC-type zinc fingers follow at residues 543–563 (CEIC…NLSC) and 568–589 (CPYC…YKVC). 3 binding to the ribonucleoprotein regions span residues 586 to 603 (YKVC…KKTV), 590 to 601 (QATHRFREDLKK), and 609 to 623 (WARL…RYKS). The region spanning 609–632 (WARLYRTLNLFRYKSRCYILTMWT) is the ITAM domain. Positions 613-616 (YRTL) match the YxxL motif. The chain crosses the membrane as a helical span at residues 627 to 647 (ILTMWTLLLIIESILWAASAA). Topologically, residues 648–1105 (EIPLVPLWTD…WVMGIINGNW (458 aa)) are lumenal. Intrachain disulfides connect cysteine 734/cysteine 769, cysteine 738/cysteine 776, cysteine 750/cysteine 884, cysteine 764/cysteine 895, cysteine 779/cysteine 903, cysteine 805/cysteine 814, cysteine 822/cysteine 831, and cysteine 862/cysteine 866. The fusion loop stretch occupies residues 756–776 (YEYENSWACNPPDCPGVGTGC). The N-linked (GlcNAc...) asparagine; by host glycan is linked to asparagine 927. Disulfide bonds link cysteine 969–cysteine 999, cysteine 992–cysteine 1044, cysteine 1009–cysteine 1014, cysteine 1045–cysteine 1050, and cysteine 1084–cysteine 1088. A helical membrane pass occupies residues 1106-1125 (VVLIVLCVLLLFSLILLSIL). The binding to the ribonucleoprotein stretch occupies residues 1121-1134 (LLSILCPVRKHKKS). At 1126 to 1134 (CPVRKHKKS) the chain is on the cytoplasmic side.

The protein belongs to the hantavirus envelope glycoprotein family. As to quaternary structure, homodimer. Homotetramer; forms heterotetrameric Gn-Gc spikes in the pre-fusion conformation. Interacts (via C-terminus) with the nucleoprotein. Interacts with host TUFM; this interaction contributes to the virus-induced degradation of mitochondria by autophagy, which leads to degradation of host MAVS and inhibition of type I interferon (IFN) responses. Interacts with host MAP1LC3B; this interaction contributes to the virus-induced degradation of mitochondria by autophagy, which leads to degradation of host MAVS and inhibition of type I interferon (IFN) responses. Homodimer. Homotetramer; forms heterotetrameric Gn-Gc spikes in the pre-fusion conformation. Homotrimer; forms homotrimer in the post-fusion conformation at acidic pH. Interacts (via C-terminus) with the nucleoprotein. In terms of processing, envelope polyprotein precursor is quickly cleaved in vivo just after synthesis, presumably by host signal peptidase.

It localises to the virion membrane. The protein resides in the host cell surface. Its subcellular location is the host Golgi apparatus membrane. The protein localises to the host endoplasmic reticulum membrane. It is found in the host mitochondrion. Forms homotetramers with glycoprotein C at the surface of the virion. Attaches the virion to host cell receptors including integrin ITGAV/ITGB3. This attachment induces virion internalization predominantly through clathrin-dependent endocytosis. Mediates the assembly and budding of infectious virus particles through its interaction with the nucleocapsid protein and the viral genome. May dysregulate normal immune and endothelial cell responses through an ITAM motif. Translocates to mitochondria, binds to host TUFM and recruits MAP1LC3B. These interactions induce mitochondrial autophagy and therefore destruction of host MAVS leading to inhibition of type I interferon (IFN) responses. Concomitant breakdown of glycoprotein N is apparently prevented by the nucleoprotein that may inhibit Gn-stimulated autophagosome-lysosome fusion. Interacts with the viral genomic RNA. Functionally, forms homotetramers with glycoprotein N at the surface of the virion. Attaches the virion to host cell receptors including integrin ITGAV/ITGB3. This attachment induces virion internalization predominantly through clathrin-dependent endocytosis. Class II fusion protein that promotes fusion of viral membrane with host endosomal membrane after endocytosis of the virion. The sequence is that of Envelopment polyprotein (GP) from Homo sapiens (Human).